The primary structure comprises 602 residues: Ligand-dependent nuclear receptor corepressor-like protein (602 aa).

Positions 104–124 are disordered; sequence PSLDSSQSTPTEELSSQGQSN. Residues 106–124 show a composition bias toward polar residues; sequence LDSSQSTPTEELSSQGQSN. Glycyl lysine isopeptide (Lys-Gly) (interchain with G-Cter in SUMO2) cross-links involve residues Lys242, Lys319, Lys340, and Lys397. Disordered stretches follow at residues 495–521 and 564–602; these read TVDG…KRGR and ERSG…SKPV. The region spanning 516-568 is the HTH psq-type domain; sequence RKKRGRYRQYDHEIMEEAIAMVMSGKMSVSKAQGIYGVPHSTLEYKVKERSGT. The segment at residues 544-564 is a DNA-binding region (H-T-H motif); it reads VSKAQGIYGVPHSTLEYKVKE. The segment covering 585 to 602 has biased composition (polar residues); that stretch reads YNMTDSGTGSCKNSSKPV.

The protein resides in the nucleus. Functionally, may act as transcription activator that binds DNA elements with the sequence 5'-CCCTATCGATCGATCTCTACCT-3'. May play a role in spermatogenesis. The sequence is that of Ligand-dependent nuclear receptor corepressor-like protein (LCORL) from Homo sapiens (Human).